Consider the following 357-residue polypeptide: 5-hydroxytryptamine receptor 5A (357 aa).

At 1–36 (MDLPINLTSFSLSTPSTLEPNRSLDTEALRTSQSFL) the chain is on the extracellular side. Asparagine 6 and asparagine 21 each carry an N-linked (GlcNAc...) asparagine glycan. A helical transmembrane segment spans residues 37-63 (SAFRVLVLTLLGFLAAATFTWNLLVLA). The Cytoplasmic segment spans residues 64–76 (TILRVRTFHRVPH). A helical membrane pass occupies residues 77–103 (NLVASMAISDVLVAVLVMPLSLVHELS). The Extracellular portion of the chain corresponds to 104–114 (GRRWQLGRRLC). Cysteine 114 and cysteine 192 are joined by a disulfide. Residues 115 to 137 (QLWIACDVLCCTASIWNVTAIAL) traverse the membrane as a helical segment. Aspartate 121 is a serotonin binding site. Residues 138–155 (DRYWSITRHLEYTLRARK) lie on the Cytoplasmic side of the membrane. A helical membrane pass occupies residues 156-176 (RVSNVMILLTWALSAVISLAP). Topologically, residues 177-198 (LLFGWGETYSELSEECQVSREP) are extracellular. The chain crosses the membrane as a helical span at residues 199 to 220 (SYTVFSTVGAFYLPLCVVLFVY). At 221 to 287 (WKIYKAAKFR…QKEQRAALMV (67 aa)) the chain is on the cytoplasmic side. A helical membrane pass occupies residues 288–312 (GILIGVFVLCWFPFFVTELISPLCS). At 313-314 (WD) the chain is on the extracellular side. The helical transmembrane segment at 315 to 339 (IPALWKSIFLWLGYSNSFFNPLIYT) threads the bilayer. Topologically, residues 340-357 (AFNRSYSSAFKVFFSKQQ) are cytoplasmic.

The protein belongs to the G-protein coupled receptor 1 family. In terms of tissue distribution, central nervous system.

The protein resides in the cell membrane. Its function is as follows. G-protein coupled receptor for 5-hydroxytryptamine (serotonin), a biogenic hormone that functions as a neurotransmitter, a hormone and a mitogen. Also functions as a receptor for ergot alkaloid derivatives and other psychoactive substances. Ligand binding causes a conformation change that triggers signaling via guanine nucleotide-binding proteins (G proteins) and modulates the activity of downstream effectors. Htr5a is coupled to G(i)/G(o) G alpha proteins and mediates inhibitory neurotransmission: signaling inhibits adenylate cyclase activity and activates a phosphatidylinositol-calcium second messenger system that regulates the release of Ca(2+) ions from intracellular stores. The sequence is that of 5-hydroxytryptamine receptor 5A from Rattus norvegicus (Rat).